The primary structure comprises 376 residues: Protein RecA (376 aa).

65–72 (GPESSGKT) contributes to the ATP binding site. The segment at 316–376 (EHDEIFTSVR…GDDLSDDDIY (61 aa)) is disordered. The span at 331–350 (GEKKDSDEDPGDNKKSKDSA) shows a compositional bias: basic and acidic residues. Over residues 366–376 (PGDDLSDDDIY) the composition is skewed to acidic residues.

The protein belongs to the RecA family.

It localises to the cytoplasm. Functionally, can catalyze the hydrolysis of ATP in the presence of single-stranded DNA, the ATP-dependent uptake of single-stranded DNA by duplex DNA, and the ATP-dependent hybridization of homologous single-stranded DNAs. It interacts with LexA causing its activation and leading to its autocatalytic cleavage. This Oenococcus oeni (strain ATCC BAA-331 / PSU-1) protein is Protein RecA.